The primary structure comprises 206 residues: Large ribosomal subunit protein uL4 (206 aa).

Positions 43 to 78 (ARSGNRKQKDREEVHHTTKKPWRQKGTGRARAGMSS) are disordered. Basic and acidic residues predominate over residues 49-58 (KQKDREEVHH). The span at 59–70 (TTKKPWRQKGTG) shows a compositional bias: basic residues.

The protein belongs to the universal ribosomal protein uL4 family. In terms of assembly, part of the 50S ribosomal subunit.

In terms of biological role, one of the primary rRNA binding proteins, this protein initially binds near the 5'-end of the 23S rRNA. It is important during the early stages of 50S assembly. It makes multiple contacts with different domains of the 23S rRNA in the assembled 50S subunit and ribosome. Forms part of the polypeptide exit tunnel. The chain is Large ribosomal subunit protein uL4 from Janthinobacterium sp. (strain Marseille) (Minibacterium massiliensis).